The chain runs to 353 residues: Photosystem II D2 protein (353 aa).

T2 is modified (N-acetylthreonine). T2 is subject to Phosphothreonine. Residues T41–T61 form a helical membrane-spanning segment. Residue H118 coordinates chlorophyll a. The helical transmembrane segment at G125–P141 threads the bilayer. 2 residues coordinate pheophytin a: Q130 and N143. Residues V153 to S166 form a helical membrane-spanning segment. H198 serves as a coordination point for chlorophyll a. The helical transmembrane segment at A208–D228 threads the bilayer. Positions 215 and 262 each coordinate a plastoquinone. H215 serves as a coordination point for Fe cation. Fe cation is bound at residue H269. The chain crosses the membrane as a helical span at residues G279–R295.

It belongs to the reaction center PufL/M/PsbA/D family. PSII is composed of 1 copy each of membrane proteins PsbA, PsbB, PsbC, PsbD, PsbE, PsbF, PsbH, PsbI, PsbJ, PsbK, PsbL, PsbM, PsbT, PsbX, PsbY, PsbZ, Psb30/Ycf12, at least 3 peripheral proteins of the oxygen-evolving complex and a large number of cofactors. It forms dimeric complexes. It depends on The D1/D2 heterodimer binds P680, chlorophylls that are the primary electron donor of PSII, and subsequent electron acceptors. It shares a non-heme iron and each subunit binds pheophytin, quinone, additional chlorophylls, carotenoids and lipids. There is also a Cl(-1) ion associated with D1 and D2, which is required for oxygen evolution. The PSII complex binds additional chlorophylls, carotenoids and specific lipids. as a cofactor.

The protein localises to the plastid. The protein resides in the chloroplast thylakoid membrane. The catalysed reaction is 2 a plastoquinone + 4 hnu + 2 H2O = 2 a plastoquinol + O2. Its function is as follows. Photosystem II (PSII) is a light-driven water:plastoquinone oxidoreductase that uses light energy to abstract electrons from H(2)O, generating O(2) and a proton gradient subsequently used for ATP formation. It consists of a core antenna complex that captures photons, and an electron transfer chain that converts photonic excitation into a charge separation. The D1/D2 (PsbA/PsbD) reaction center heterodimer binds P680, the primary electron donor of PSII as well as several subsequent electron acceptors. D2 is needed for assembly of a stable PSII complex. This Adiantum capillus-veneris (Maidenhair fern) protein is Photosystem II D2 protein.